A 179-amino-acid polypeptide reads, in one-letter code: Ribosome maturation factor RimM (179 aa).

Residues lysine 100–leucine 176 enclose the PRC barrel domain.

This sequence belongs to the RimM family. Binds ribosomal protein uS19.

It localises to the cytoplasm. Its function is as follows. An accessory protein needed during the final step in the assembly of 30S ribosomal subunit, possibly for assembly of the head region. Essential for efficient processing of 16S rRNA. May be needed both before and after RbfA during the maturation of 16S rRNA. It has affinity for free ribosomal 30S subunits but not for 70S ribosomes. The protein is Ribosome maturation factor RimM of Prochlorococcus marinus (strain MIT 9301).